Consider the following 239-residue polypeptide: Glandular kallikrein, prostatic (239 aa).

In terms of domain architecture, Peptidase S1 spans 1-236 (VIGGQECARD…YREWIERTMA (236 aa)). 5 cysteine pairs are disulfide-bonded: C7–C151, C26–C42, C128–C197, C162–C176, and C187–C212. The active-site Charge relay system is H41. A glycan (N-linked (GlcNAc...) asparagine) is linked at N78. Residue D96 is the Charge relay system of the active site. Residue N169 is glycosylated (N-linked (GlcNAc...) asparagine). S191 functions as the Charge relay system in the catalytic mechanism.

It belongs to the peptidase S1 family. Kallikrein subfamily.

The catalysed reaction is Preferential cleavage of Arg-|-Xaa bonds in small molecule substrates. Highly selective action to release kallidin (lysyl-bradykinin) from kininogen involves hydrolysis of Met-|-Xaa or Leu-|-Xaa.. Functionally, glandular kallikreins cleave Met-Lys and Arg-Ser bonds in kininogen to release Lys-bradykinin. The polypeptide is Glandular kallikrein, prostatic (Cavia porcellus (Guinea pig)).